Here is a 578-residue protein sequence, read N- to C-terminus: Dystrotelin (578 aa).

The ZZ-type zinc-finger motif lies at 223 to 279 (THPARCTLCRTFPITGLRYRCLKCLNFDICQMCFLSGLHSKSHQKSHPVIEHCIQMS). Zn(2+)-binding residues include Cys228, Cys231, Cys243, Cys246, Cys252, Cys255, His265, and His269. The stretch at 322-351 (HHAQARLLKKQLNQYKDKLQAIYTSQEERI) forms a coiled coil. The disordered stretch occupies residues 382–475 (RLQPPGPSSS…QSQTQKMPQK (94 aa)). 2 stretches are compositionally biased toward basic and acidic residues: residues 399-410 (KVDHSSTEKVPK) and 431-451 (PKLD…HALR). The span at 455–472 (SPETTLHSTRAQSQTQKM) shows a compositional bias: polar residues. The stretch at 503-537 (ALAAVEKKEAGNIKERKDELEEEELQELLSKLMDA) forms a coiled coil.

The protein resides in the cell membrane. This Homo sapiens (Human) protein is Dystrotelin (DYTN).